Consider the following 427-residue polypeptide: Enolase (427 aa).

Gln-163 is a binding site for (2R)-2-phosphoglycerate. Glu-205 functions as the Proton donor in the catalytic mechanism. Positions 242, 285, and 312 each coordinate Mg(2+). (2R)-2-phosphoglycerate-binding residues include Lys-337, Arg-366, Ser-367, and Lys-388. Lys-337 serves as the catalytic Proton acceptor.

The protein belongs to the enolase family. It depends on Mg(2+) as a cofactor.

It localises to the cytoplasm. It is found in the secreted. Its subcellular location is the cell surface. It carries out the reaction (2R)-2-phosphoglycerate = phosphoenolpyruvate + H2O. The protein operates within carbohydrate degradation; glycolysis; pyruvate from D-glyceraldehyde 3-phosphate: step 4/5. Catalyzes the reversible conversion of 2-phosphoglycerate (2-PG) into phosphoenolpyruvate (PEP). It is essential for the degradation of carbohydrates via glycolysis. The polypeptide is Enolase (Xanthobacter autotrophicus (strain ATCC BAA-1158 / Py2)).